The primary structure comprises 61 residues: Small ribosomal subunit protein uS14 (61 aa).

Positions 24, 27, 40, and 43 each coordinate Zn(2+).

It belongs to the universal ribosomal protein uS14 family. Zinc-binding uS14 subfamily. In terms of assembly, part of the 30S ribosomal subunit. Contacts proteins S3 and S10. Zn(2+) serves as cofactor.

Its function is as follows. Binds 16S rRNA, required for the assembly of 30S particles and may also be responsible for determining the conformation of the 16S rRNA at the A site. The protein is Small ribosomal subunit protein uS14 of Mycoplasma pneumoniae (strain ATCC 29342 / M129 / Subtype 1) (Mycoplasmoides pneumoniae).